Reading from the N-terminus, the 205-residue chain is Small ribosomal subunit protein uS4 (205 aa).

Positions 25–48 (KTIEARPTPPGQHGAKNTRRKKSD) are disordered. The S4 RNA-binding domain maps to 94 to 157 (RRLDNVVFRA…TKLPIVVETL (64 aa)).

The protein belongs to the universal ribosomal protein uS4 family. In terms of assembly, part of the 30S ribosomal subunit. Contacts protein S5. The interaction surface between S4 and S5 is involved in control of translational fidelity.

One of the primary rRNA binding proteins, it binds directly to 16S rRNA where it nucleates assembly of the body of the 30S subunit. Functionally, with S5 and S12 plays an important role in translational accuracy. This is Small ribosomal subunit protein uS4 from Methylobacillus flagellatus (strain ATCC 51484 / DSM 6875 / VKM B-1610 / KT).